The primary structure comprises 212 residues: Putative DNA-binding protein At1g48610 (212 aa).

Residues 1–130 (MAKTALTPPA…GRPKKDDVAA (130 aa)) form a disordered region. Positions 27-44 (NKPQTDATGVSATDTASQ) are enriched in polar residues. DNA-binding regions (a.T hook) lie at residues 45-56 (KRGRGRPPKAKS), 70-79 (TKPSGRPKRN), and 94-98 (KKRGR). Residues 57-72 (DSSQIGAVSAKASTKP) are compositionally biased toward polar residues. Over residues 103-113 (TVTAAVVTTAT) the composition is skewed to low complexity. Positions 118–127 (RKRGRPKKDD) form a DNA-binding region, a.T hook 4. Positions 176–210 (DLKKRTALLQKKVKEAAAKLKQAVTAIDEVQKLAD) form a coiled coil.

It localises to the nucleus. May bind DNA. The protein is Putative DNA-binding protein At1g48610 of Arabidopsis thaliana (Mouse-ear cress).